Consider the following 468-residue polypeptide: Trigger factor (468 aa).

One can recognise a PPIase FKBP-type domain in the interval 162–243 (GDVLTLDLQA…VSQVAARELP (82 aa)). Residues 428-468 (NGEIVDLDDEEDEETEAAEADATEAADAEKADDKAEEKTEG) are disordered. Positions 432 to 453 (VDLDDEEDEETEAAEADATEAA) are enriched in acidic residues. Over residues 454–468 (DAEKADDKAEEKTEG) the composition is skewed to basic and acidic residues.

The protein belongs to the FKBP-type PPIase family. Tig subfamily.

It is found in the cytoplasm. The catalysed reaction is [protein]-peptidylproline (omega=180) = [protein]-peptidylproline (omega=0). Involved in protein export. Acts as a chaperone by maintaining the newly synthesized protein in an open conformation. Functions as a peptidyl-prolyl cis-trans isomerase. The sequence is that of Trigger factor from Streptomyces coelicolor (strain ATCC BAA-471 / A3(2) / M145).